The sequence spans 343 residues: MKKTIVALAVAAVAATSANAATVYNQDGTKVDVNGSVRLILKKEKNERGDLVDNGSRVSFKASHDLGEGLSALAYAELRFSKNEKVEVKDAQNQQVVRKYEVERIGNDVHVKRLYAGFAYEGLGTLTFGNQLTIGDDVGVSDYTYFLGGINNLLSSGEKAINFKSAEFNGFTFGGAYVFSADADKQAPRDGRGFVVAGLYNRKMGDVGFALEAGYSQKYVTAAAKQEKEKAFMVGTELSYAGLALGVDYAQSKVTNVEGKKRALEVGLNYDINDKAKVYTDLIWAKEGPKGATTRDRSIILGAGYKLHKQVETFVEGGWGREKDANGVTTKDNKVGVGLRVHF.

The N-terminal stretch at methionine 1–alanine 20 is a signal peptide.

Disulfide bond interactions within and between MOMP molecules and other components form high molecular-weight oligomers.

Its subcellular location is the cell outer membrane. Structural rigidity of the outer membrane of elementary bodies and porin forming, permitting diffusion of solutes through the intracellular reticulate body membrane. This is Major outer membrane protein (ompH) from Pasteurella multocida.